Reading from the N-terminus, the 195-residue chain is Phosphoheptose isomerase (195 aa).

Positions 36–195 constitute an SIS domain; sequence VSKVLQSGNT…IVEYNLFKME (160 aa). 51 to 53 contacts substrate; it reads NGG. Zn(2+) contacts are provided by histidine 60 and glutamate 64. Substrate contacts are provided by residues glutamate 64, 95–96, 121–123, serine 126, and glutamine 173; these read ND and STS. Glutamine 173 and histidine 181 together coordinate Zn(2+).

This sequence belongs to the SIS family. GmhA subfamily. The cofactor is Zn(2+).

The protein resides in the cytoplasm. The catalysed reaction is 2 D-sedoheptulose 7-phosphate = D-glycero-alpha-D-manno-heptose 7-phosphate + D-glycero-beta-D-manno-heptose 7-phosphate. Its pathway is carbohydrate biosynthesis; D-glycero-D-manno-heptose 7-phosphate biosynthesis; D-glycero-alpha-D-manno-heptose 7-phosphate and D-glycero-beta-D-manno-heptose 7-phosphate from sedoheptulose 7-phosphate: step 1/1. Functionally, catalyzes the isomerization of sedoheptulose 7-phosphate in D-glycero-D-manno-heptose 7-phosphate. The protein is Phosphoheptose isomerase of Leptospira borgpetersenii serovar Hardjo-bovis (strain JB197).